The primary structure comprises 424 residues: Zinc metalloproteinase-disintegrin-like brevilysin H2b (424 aa).

Glutamine 1 is subject to Pyrrolidone carboxylic acid. Residues arginine 9–proline 207 enclose the Peptidase M12B domain. Asparagine 69 carries an N-linked (GlcNAc...) asparagine glycan. Aspartate 96 contributes to the Ca(2+) binding site. Cystine bridges form between cysteine 120–cysteine 202, cysteine 164–cysteine 186, and cysteine 166–cysteine 169. A Zn(2+)-binding site is contributed by histidine 145. Glutamate 146 is a catalytic residue. Zn(2+)-binding residues include histidine 149 and histidine 155. Asparagine 185 is a glycosylation site (N-linked (GlcNAc...) asparagine). Ca(2+) contacts are provided by cysteine 202, asparagine 205, valine 217, asparagine 220, leucine 222, glutamate 224, glutamate 227, and aspartate 230. Positions proline 215 to asparagine 301 constitute a Disintegrin domain. 14 disulfide bridges follow: cysteine 218–cysteine 247, cysteine 229–cysteine 242, cysteine 231–cysteine 237, cysteine 241–cysteine 264, cysteine 255–cysteine 261, cysteine 260–cysteine 286, cysteine 273–cysteine 293, cysteine 280–cysteine 312, cysteine 305–cysteine 317, cysteine 324–cysteine 374, cysteine 339–cysteine 385, cysteine 352–cysteine 362, cysteine 369–cysteine 411, and cysteine 405–cysteine 417. A D/ECD-tripeptide motif is present at residues aspartate 279 to aspartate 281. The Ca(2+) site is built by aspartate 281, glutamate 284, and aspartate 296.

This sequence belongs to the venom metalloproteinase (M12B) family. P-III subfamily. P-IIIa sub-subfamily. Monomer. Requires Zn(2+) as cofactor. Post-translationally, glycosylated. Expressed by the venom gland.

It is found in the secreted. With respect to regulation, its proteolytic activity is inhibited by EDTA, TPEN, 1,10-phenanthroline, and some thiol compounds, but is enhanced by alkaline earth metal ions (Mg2+, Ca2+, Sr2+, and Ba2+). Its activity is not modulated by urea (4 M). Functionally, non-hemorrhagic metalloproteinase that degrades fibrinogen. The alpha chain (FGA) is rapidly degraded, the beta chain (FGB) is degraded very slowly, while the gamma chain is left intact. Shows a prefential cleavage at X-Leu bonds. Cleaves insulin B chain at '29-His-|-Leu-30', '33-Ser-|-His-34', '38-Ala-|-Leu-39' and '40-Tyr-|-Leu-41' bonds. The chain is Zinc metalloproteinase-disintegrin-like brevilysin H2b from Gloydius brevicauda (Korean slamosa snake).